Consider the following 626-residue polypeptide: tRNA uridine 5-carboxymethylaminomethyl modification enzyme MnmG (626 aa).

13–18 (GGGHAG) is an FAD binding site. Position 273–287 (273–287 (GPRYCPSIEDKIHRF)) interacts with NAD(+).

Belongs to the MnmG family. In terms of assembly, homodimer. Heterotetramer of two MnmE and two MnmG subunits. FAD serves as cofactor.

The protein localises to the cytoplasm. NAD-binding protein involved in the addition of a carboxymethylaminomethyl (cmnm) group at the wobble position (U34) of certain tRNAs, forming tRNA-cmnm(5)s(2)U34. This is tRNA uridine 5-carboxymethylaminomethyl modification enzyme MnmG from Acinetobacter baumannii (strain ACICU).